We begin with the raw amino-acid sequence, 462 residues long: L-seryl-tRNA(Sec) selenium transferase (462 aa).

At K293 the chain carries N6-(pyridoxal phosphate)lysine.

The protein belongs to the SelA family. The cofactor is pyridoxal 5'-phosphate.

Its subcellular location is the cytoplasm. The catalysed reaction is L-seryl-tRNA(Sec) + selenophosphate + H(+) = L-selenocysteinyl-tRNA(Sec) + phosphate. It participates in aminoacyl-tRNA biosynthesis; selenocysteinyl-tRNA(Sec) biosynthesis; selenocysteinyl-tRNA(Sec) from L-seryl-tRNA(Sec) (bacterial route): step 1/1. In terms of biological role, converts seryl-tRNA(Sec) to selenocysteinyl-tRNA(Sec) required for selenoprotein biosynthesis. This is L-seryl-tRNA(Sec) selenium transferase from Clostridium botulinum (strain 657 / Type Ba4).